A 1023-amino-acid chain; its full sequence is Phosphoenolpyruvate carboxylase (1023 aa).

Active-site residues include His199 and Lys669.

The protein belongs to the PEPCase type 1 family. Mg(2+) serves as cofactor.

The enzyme catalyses oxaloacetate + phosphate = phosphoenolpyruvate + hydrogencarbonate. In terms of biological role, forms oxaloacetate, a four-carbon dicarboxylic acid source for the tricarboxylic acid cycle. This Trichormus variabilis (strain ATCC 29413 / PCC 7937) (Anabaena variabilis) protein is Phosphoenolpyruvate carboxylase.